The sequence spans 178 residues: N-alpha-acetyltransferase 20 (178 aa).

The N-acetyltransferase domain maps to 2 to 157 (TTLRAFTCDD…DAYDMRKALS (156 aa)).

Belongs to the acetyltransferase family. ARD1 subfamily. As to quaternary structure, component of the N-terminal acetyltransferase B (NatB) complex which is composed of naa20 and naa25.

Its subcellular location is the cytoplasm. It is found in the nucleus. It carries out the reaction N-terminal L-methionyl-L-asparaginyl-[protein] + acetyl-CoA = N-terminal N(alpha)-acetyl-L-methionyl-L-asparaginyl-[protein] + CoA + H(+). The enzyme catalyses N-terminal L-methionyl-L-glutaminyl-[protein] + acetyl-CoA = N-terminal N(alpha)-acetyl-L-methionyl-L-glutaminyl-[protein] + CoA + H(+). The catalysed reaction is N-terminal L-methionyl-L-aspartyl-[protein] + acetyl-CoA = N-terminal N(alpha)-acetyl-L-methionyl-L-aspartyl-[protein] + CoA + H(+). It catalyses the reaction N-terminal L-methionyl-L-glutamyl-[protein] + acetyl-CoA = N-terminal N(alpha)-acetyl-L-methionyl-L-glutamyl-[protein] + CoA + H(+). Functionally, catalytic subunit of the NatB complex which catalyzes acetylation of the N-terminal methionine residues of peptides beginning with Met-Asp, Met-Glu, Met-Asn and Met-Gln. Proteins with cell cycle functions are overrepresented in the pool of NatB substrates. Required for maintaining the structure and function of actomyosin fibers and for proper cellular migration. This Danio rerio (Zebrafish) protein is N-alpha-acetyltransferase 20 (naa20).